A 411-amino-acid chain; its full sequence is Pre-mRNA-splicing factor dre4 (411 aa).

A WW 1 domain is found at 3 to 36; the sequence is QPLPPGWTEHKAPSGIPYYWNAELKKSTYQRPSF. Residues 65–84 are disordered; it reads NAEERKNSRDLRKQLPDRPK. A compositionally biased stretch (basic and acidic residues) spans 66-83; that stretch reads AEERKNSRDLRKQLPDRP. The 34-residue stretch at 89 to 122 folds into the WW 2 domain; the sequence is IPNNDSWVVVFTKKNRYFFHNLKSHESYWEPPLE. The interval 138-209 is disordered; it reads ISKDSSQSQN…KSHSAEELEF (72 aa). Residues 140–151 show a composition bias toward polar residues; the sequence is KDSSQSQNVDSG. Residues 152–166 are compositionally biased toward basic and acidic residues; the sequence is KTNHEEIHESRHLQT. Residues 167 to 179 show a composition bias toward acidic residues; the sequence is EIEEPSGLEESSE. An FF domain is found at 239–293; the sequence is TDDARRVFTELLKDKNIGAYQPWELVYPKLLDDDRFYVLDSGERRKEVFEEYCKS.

In terms of assembly, component of the spliceosomal complex. Interacts with prp19.

The protein resides in the nucleus. Its function is as follows. Component of the spliceosome involved in mRNA processing. This is Pre-mRNA-splicing factor dre4 (dre4) from Schizosaccharomyces pombe (strain 972 / ATCC 24843) (Fission yeast).